The chain runs to 150 residues: Large-conductance mechanosensitive channel (150 aa).

Helical transmembrane passes span 19 to 39 (VGIIIGGAFGAIVNTLVSDVL) and 85 to 105 (GIFLNALISFMIMAFAVFMLI).

This sequence belongs to the MscL family. In terms of assembly, homopentamer.

The protein resides in the cell inner membrane. In terms of biological role, channel that opens in response to stretch forces in the membrane lipid bilayer. May participate in the regulation of osmotic pressure changes within the cell. This is Large-conductance mechanosensitive channel from Chlorobium limicola (strain DSM 245 / NBRC 103803 / 6330).